Consider the following 159-residue polypeptide: MADS-box transcription factor 23 (159 aa).

Residues 1-61 form the MADS-box domain; it reads MGRGKIEIKR…SRLYDFASSS (61 aa). The K-box domain occupies 86–159; that stretch reads AKLWQQEAAS…QELSRKVVTT (74 aa).

Expressed in seedling roots and developing seeds.

It localises to the nucleus. Probable transcription factor. The polypeptide is MADS-box transcription factor 23 (MADS23) (Oryza sativa subsp. japonica (Rice)).